The following is a 300-amino-acid chain: MAATAISSLSFPALGQSDKISNFASSRPLASAIRICTKFSRLSLNSRSTSKSLIHCMSNVTADVPPVSETKSKFLKAYKRPIPSIYNTVLQELIVQQHLMRYKKTYRYDPVFALGFVTVYDQLMEGYPSDQDRDAIFKAYIEALNEDPKQYRIDAQKMEEWARSQTSASLVDFSSKEGDIEAVLKDIAGRAGSKEGFSYSRFFAVGLFRLLELASATDPTVLDKLCASLNINKKSVDRDLDVYRNLLSKLVQAKELLKEYVEREKKKQGERAQSQKANETISKCLGDTLYNPSFLVERKS.

The N-terminal 67 residues, 1-67 (MAATAISSLS…SNVTADVPPV (67 aa)), are a transit peptide targeting the chloroplast. At 68–196 (SETKSKFLKA…IAGRAGSKEG (129 aa)) the chain is on the chloroplast intermembrane side. The helical transmembrane segment at 197 to 219 (FSYSRFFAVGLFRLLELASATDP) threads the bilayer. Topologically, residues 220–300 (TVLDKLCASL…NPSFLVERKS (81 aa)) are cytoplasmic. The stretch at 239–268 (DLDVYRNLLSKLVQAKELLKEYVEREKKKQ) forms a coiled coil.

Belongs to the THF1 family. In terms of assembly, interacts with GPA1. Ubiquitous. Present at higher level in hypocotyls (at protein level). Ubiquitously expressed in all organs, in roots of both light-grown and dark-grown seedlings. Highly expressed in the root apical meristems.

It is found in the plastid. The protein localises to the chloroplast outer membrane. It localises to the chloroplast stroma. Its function is as follows. Involved in a dynamic process of vesicle-mediated thylakoid membrane biogenesis. Required for the normal organization of vesicles into mature thylakoid stacks and ultimately for leaf development. Also involved in a sugar-signaling mechanism in roots by mediating signaling between the plasma membrane and the plastid. Probably acts downstream of the plasma membrane-delimited heterotrimeric G-protein GPA1 in a D-glucose signaling pathway. The polypeptide is Protein THYLAKOID FORMATION 1, chloroplastic (THF1) (Arabidopsis thaliana (Mouse-ear cress)).